Reading from the N-terminus, the 195-residue chain is Protein GrpE (195 aa).

It belongs to the GrpE family. Homodimer.

The protein localises to the cytoplasm. Participates actively in the response to hyperosmotic and heat shock by preventing the aggregation of stress-denatured proteins, in association with DnaK and GrpE. It is the nucleotide exchange factor for DnaK and may function as a thermosensor. Unfolded proteins bind initially to DnaJ; upon interaction with the DnaJ-bound protein, DnaK hydrolyzes its bound ATP, resulting in the formation of a stable complex. GrpE releases ADP from DnaK; ATP binding to DnaK triggers the release of the substrate protein, thus completing the reaction cycle. Several rounds of ATP-dependent interactions between DnaJ, DnaK and GrpE are required for fully efficient folding. The polypeptide is Protein GrpE (Francisella tularensis subsp. holarctica (strain FTNF002-00 / FTA)).